Consider the following 134-residue polypeptide: Replication enhancer protein (134 aa).

This sequence belongs to the geminiviridae replication enhancer protein family. Homooligomer. Interacts with the replication-associated protein (REP). Interacts with host proliferating cell nuclear antigen (PCNA). Interacts with host retinoblastoma-related protein 1 (RBR1), and may thereby deregulate the host cell cycle. Oligomerization and interaction with PCNA are necessary for optimal replication enhancement.

In terms of biological role, increases viral DNA accumulation. Enhances infectivity and symptom expression. The polypeptide is Replication enhancer protein (Squash leaf curl virus (SLCV)).